A 188-amino-acid polypeptide reads, in one-letter code: Hypoxanthine/guanine phosphoribosyltransferase (188 aa).

This sequence belongs to the purine/pyrimidine phosphoribosyltransferase family. Archaeal HPRT subfamily. Homodimer.

It localises to the cytoplasm. The enzyme catalyses IMP + diphosphate = hypoxanthine + 5-phospho-alpha-D-ribose 1-diphosphate. It carries out the reaction GMP + diphosphate = guanine + 5-phospho-alpha-D-ribose 1-diphosphate. The protein operates within purine metabolism; IMP biosynthesis via salvage pathway; IMP from hypoxanthine: step 1/1. Its function is as follows. Catalyzes a salvage reaction resulting in the formation of IMP that is energically less costly than de novo synthesis. The sequence is that of Hypoxanthine/guanine phosphoribosyltransferase from Methanobrevibacter ruminantium (strain ATCC 35063 / DSM 1093 / JCM 13430 / OCM 146 / M1) (Methanobacterium ruminantium).